Reading from the N-terminus, the 610-residue chain is DNA mismatch repair protein MutL (610 aa).

The tract at residues 351-406 (GQRPQAPWSAETSPSRPYQPAPAFSERPQASFDGLSTPTARAEPQFSPDPVSPGLA) is disordered.

This sequence belongs to the DNA mismatch repair MutL/HexB family.

Functionally, this protein is involved in the repair of mismatches in DNA. It is required for dam-dependent methyl-directed DNA mismatch repair. May act as a 'molecular matchmaker', a protein that promotes the formation of a stable complex between two or more DNA-binding proteins in an ATP-dependent manner without itself being part of a final effector complex. The chain is DNA mismatch repair protein MutL from Rhizobium etli (strain ATCC 51251 / DSM 11541 / JCM 21823 / NBRC 15573 / CFN 42).